Here is a 985-residue protein sequence, read N- to C-terminus: Thioredoxin domain-containing protein 11 (985 aa).

Gly residues predominate over residues 1–11 (MSECGGRGGGS). Positions 1-38 (MSECGGRGGGSSSSEDAEDEGGGGGGPAGSDCLSSSPT) are disordered. The segment covering 29 to 38 (GSDCLSSSPT) has biased composition (low complexity). The helical transmembrane segment at 65–85 (LLCGAVALGCALLLALKFTCS) threads the bilayer. Positions 92–214 (IPAKPPVSFF…IEKFVRRVMK (123 aa)) constitute a Thioredoxin 1 domain. Disulfide bonds link Cys-469–Cys-472 and Cys-719–Cys-722. In terms of domain architecture, Thioredoxin 2 spans 649 to 799 (LDPKQALMKL…LLRFILHHSD (151 aa)). Positions 821–919 (VLQRGHISHL…ASENLLTENT (99 aa)) form a coiled coil. Ser-828 carries the phosphoserine modification. A disordered region spans residues 935 to 985 (RDGAESLAAQREVHPKQPEPSATPQLPGSSPPPANVSATLVSERNKENRTD).

The protein belongs to the protein disulfide isomerase family. As to quaternary structure, interacts with the cytoplasmic part of DUOX1 and DUOX2. Interacts with TPO and CYBA. Widely expressed at low level. Expressed at higher level in thyroid and prostate.

It is found in the endoplasmic reticulum membrane. Its function is as follows. May act as a redox regulator involved in DUOX proteins folding. The interaction with DUOX1 and DUOX2 suggest that it belongs to a multiprotein complex constituting the thyroid H(2)O(2) generating system. It is however not sufficient to assist DUOX1 and DUOX2 in H(2)O(2) generation. The sequence is that of Thioredoxin domain-containing protein 11 (TXNDC11) from Homo sapiens (Human).